We begin with the raw amino-acid sequence, 465 residues long: Hydroxyacid-oxoacid transhydrogenase, mitochondrial (465 aa).

It belongs to the iron-containing alcohol dehydrogenase family. Hydroxyacid-oxoacid transhydrogenase subfamily.

It is found in the mitochondrion. It catalyses the reaction (S)-3-hydroxybutanoate + 2-oxoglutarate = (R)-2-hydroxyglutarate + acetoacetate. It carries out the reaction 4-hydroxybutanoate + 2-oxoglutarate = (R)-2-hydroxyglutarate + succinate semialdehyde. Functionally, catalyzes the cofactor-independent reversible oxidation of gamma-hydroxybutyrate (GHB) to succinic semialdehyde (SSA) coupled to reduction of 2-ketoglutarate (2-KG) to D-2-hydroxyglutarate (D-2-HG). L-3-hydroxybutyrate (L-3-OHB) is also a substrate for HOT when using 2-KG as hydrogen acceptor, resulting in the formation of D-2-HG. This chain is Hydroxyacid-oxoacid transhydrogenase, mitochondrial, found in Caenorhabditis briggsae.